A 421-amino-acid polypeptide reads, in one-letter code: UDP-N-acetylglucosamine 1-carboxyvinyltransferase (421 aa).

24–25 (KN) is a binding site for phosphoenolpyruvate. R93 provides a ligand contact to UDP-N-acetyl-alpha-D-glucosamine. Catalysis depends on C117, which acts as the Proton donor. C117 carries the 2-(S-cysteinyl)pyruvic acid O-phosphothioketal modification. UDP-N-acetyl-alpha-D-glucosamine-binding residues include D307 and I329.

Belongs to the EPSP synthase family. MurA subfamily.

Its subcellular location is the cytoplasm. The enzyme catalyses phosphoenolpyruvate + UDP-N-acetyl-alpha-D-glucosamine = UDP-N-acetyl-3-O-(1-carboxyvinyl)-alpha-D-glucosamine + phosphate. The protein operates within cell wall biogenesis; peptidoglycan biosynthesis. Cell wall formation. Adds enolpyruvyl to UDP-N-acetylglucosamine. The chain is UDP-N-acetylglucosamine 1-carboxyvinyltransferase from Blochmanniella pennsylvanica (strain BPEN).